Here is a 226-residue protein sequence, read N- to C-terminus: Leucyl/phenylalanyl-tRNA--protein transferase (226 aa).

This sequence belongs to the L/F-transferase family.

The protein resides in the cytoplasm. The enzyme catalyses N-terminal L-lysyl-[protein] + L-leucyl-tRNA(Leu) = N-terminal L-leucyl-L-lysyl-[protein] + tRNA(Leu) + H(+). The catalysed reaction is N-terminal L-arginyl-[protein] + L-leucyl-tRNA(Leu) = N-terminal L-leucyl-L-arginyl-[protein] + tRNA(Leu) + H(+). It catalyses the reaction L-phenylalanyl-tRNA(Phe) + an N-terminal L-alpha-aminoacyl-[protein] = an N-terminal L-phenylalanyl-L-alpha-aminoacyl-[protein] + tRNA(Phe). Its function is as follows. Functions in the N-end rule pathway of protein degradation where it conjugates Leu, Phe and, less efficiently, Met from aminoacyl-tRNAs to the N-termini of proteins containing an N-terminal arginine or lysine. The chain is Leucyl/phenylalanyl-tRNA--protein transferase from Azotobacter vinelandii (strain DJ / ATCC BAA-1303).